An 85-amino-acid polypeptide reads, in one-letter code: Large ribosomal subunit protein bL27 (85 aa).

The interval 1–25 is disordered; that stretch reads MAHKKAGSSSKNGRDSNPQYLGVKR. A compositionally biased stretch (polar residues) spans 7–19; that stretch reads GSSSKNGRDSNPQ.

The protein belongs to the bacterial ribosomal protein bL27 family.

The sequence is that of Large ribosomal subunit protein bL27 from Micrococcus luteus (strain ATCC 4698 / DSM 20030 / JCM 1464 / CCM 169 / CCUG 5858 / IAM 1056 / NBRC 3333 / NCIMB 9278 / NCTC 2665 / VKM Ac-2230) (Micrococcus lysodeikticus).